Consider the following 395-residue polypeptide: RNA polymerase II elongation factor ELL3 (395 aa).

Disordered stretches follow at residues 129–177 (LTEG…SEPM) and 189–281 (PSRE…SPEE). Ser242 carries the post-translational modification Phosphoserine. The segment covering 243–260 (QEGEDWGQDEDEEGDEDG) has biased composition (acidic residues). The segment covering 269 to 279 (SAPSASESPSP) has biased composition (low complexity). The OCEL domain maps to 283 to 393 (PDYLLQYRAI…LILEFEEKNR (111 aa)).

The protein belongs to the ELL/occludin family. In terms of assembly, component of the little elongation complex (LEC), at least composed of ELL (ELL, ELL2 or ELL3), ZC3H8, ICE1 and ICE2. Component of the super elongation complex (SEC), at least composed of EAF1, EAF2, CDK9, MLLT3/AF9, AFF (AFF1 or AFF4), the P-TEFb complex and ELL (ELL, ELL2 or ELL3). Interacts with AFF4. Actively expressed in embryonic stem cells (ES cells), while it is weakly expressed in differentiated cells.

It is found in the nucleus. In terms of biological role, enhancer-binding elongation factor that specifically binds enhancers in embryonic stem cells (ES cells), marks them, and is required for their future activation during stem cell specification. Elongation factor component of the super elongation complex (SEC), a complex required to increase the catalytic rate of RNA polymerase II transcription by suppressing transient pausing by the polymerase at multiple sites along the DNA. Component of the little elongation complex (LEC), a complex required to regulate small nuclear RNA (snRNA) gene transcription by RNA polymerase II and III. Does not only bind to enhancer regions of active genes, but also marks the enhancers that are in a poised or inactive state in ES cells and is required for establishing proper RNA polymerase II occupancy at developmentally regulated genes in a cohesin-dependent manner. Probably required for priming developmentally regulated genes for later recruitment of the super elongation complex (SEC), for transcriptional activation during differentiation. Required for recruitment of P-TEFb within SEC during differentiation. Probably preloaded on germ cell chromatin, suggesting that it may prime gene activation by marking enhancers as early as in the germ cells. Promoting epithelial-mesenchymal transition (EMT). The protein is RNA polymerase II elongation factor ELL3 (Ell3) of Mus musculus (Mouse).